The primary structure comprises 555 residues: CTP synthase (555 aa).

Positions methionine 1–isoleucine 265 are amidoligase domain. Serine 13 is a binding site for CTP. Serine 13 contacts UTP. ATP is bound by residues serine 14–isoleucine 19 and aspartate 71. Residues aspartate 71 and glutamate 139 each coordinate Mg(2+). Residues aspartate 146–glutamate 148, lysine 186–glutamine 191, and lysine 222 contribute to the CTP site. UTP-binding positions include lysine 186–glutamine 191 and lysine 222. In terms of domain architecture, Glutamine amidotransferase type-1 spans threonine 290–alanine 541. An L-glutamine-binding site is contributed by glycine 351. Cysteine 378 serves as the catalytic Nucleophile; for glutamine hydrolysis. Residues leucine 379 to glutamine 382, glutamate 402, and arginine 469 contribute to the L-glutamine site. Catalysis depends on residues histidine 514 and glutamate 516.

This sequence belongs to the CTP synthase family. As to quaternary structure, homotetramer.

The catalysed reaction is UTP + L-glutamine + ATP + H2O = CTP + L-glutamate + ADP + phosphate + 2 H(+). It catalyses the reaction L-glutamine + H2O = L-glutamate + NH4(+). It carries out the reaction UTP + NH4(+) + ATP = CTP + ADP + phosphate + 2 H(+). Its pathway is pyrimidine metabolism; CTP biosynthesis via de novo pathway; CTP from UDP: step 2/2. Allosterically activated by GTP, when glutamine is the substrate; GTP has no effect on the reaction when ammonia is the substrate. The allosteric effector GTP functions by stabilizing the protein conformation that binds the tetrahedral intermediate(s) formed during glutamine hydrolysis. Inhibited by the product CTP, via allosteric rather than competitive inhibition. Its function is as follows. Catalyzes the ATP-dependent amination of UTP to CTP with either L-glutamine or ammonia as the source of nitrogen. Regulates intracellular CTP levels through interactions with the four ribonucleotide triphosphates. The sequence is that of CTP synthase from Coxiella burnetii (strain CbuG_Q212) (Coxiella burnetii (strain Q212)).